A 273-amino-acid chain; its full sequence is Type II restriction enzyme HgiCII (273 aa).

The protein belongs to the TdeIII type II restriction endonuclease family.

It carries out the reaction Endonucleolytic cleavage of DNA to give specific double-stranded fragments with terminal 5'-phosphates.. A P subtype restriction enzyme that recognizes the double-stranded sequence 5'-GGWCC-3' and cleaves after G-1. This chain is Type II restriction enzyme HgiCII, found in Herpetosiphon aurantiacus (Herpetosiphon giganteus).